We begin with the raw amino-acid sequence, 387 residues long: MNGSRQYILAAGGTGGHMIPAHALAVELMRRGHHVALVTDERGTRFPELFKDVQIHQLPAGRLTGGVKGLFQAMRNIWAGRERALTLYENFTPAAVVGFGGYPALPALLAAFKAKIPTVIHEQNAVMGRTNRFLAGRVDAIATAYHQVDRLKKRYRRKTEVTGNPVRDEVLFLRDLPYPPLSDNSIFRILVVGGSQGASILSEVVPEGLGLLPLHLRRRLQVTQQCRPEDLEKTRAQYAKLGIPADISTYMADLPQRLGWSHLVISRAGASTIAELGVAGRPAILIPYPAAMDNHQYANARELVSAGGARLIDQRRFNPFELAKQIQKMALEPSALKNAAARARQVGYPDAVEKLADLVERVGGNLPQQNSIEEDSTFEKNQEGAVA.

Residues 14–16 (TGG), N124, R167, S195, and Q296 each bind UDP-N-acetyl-alpha-D-glucosamine. The tract at residues 366-387 (LPQQNSIEEDSTFEKNQEGAVA) is disordered. Over residues 377-387 (TFEKNQEGAVA) the composition is skewed to basic and acidic residues.

This sequence belongs to the glycosyltransferase 28 family. MurG subfamily.

The protein resides in the cell inner membrane. It carries out the reaction di-trans,octa-cis-undecaprenyl diphospho-N-acetyl-alpha-D-muramoyl-L-alanyl-D-glutamyl-meso-2,6-diaminopimeloyl-D-alanyl-D-alanine + UDP-N-acetyl-alpha-D-glucosamine = di-trans,octa-cis-undecaprenyl diphospho-[N-acetyl-alpha-D-glucosaminyl-(1-&gt;4)]-N-acetyl-alpha-D-muramoyl-L-alanyl-D-glutamyl-meso-2,6-diaminopimeloyl-D-alanyl-D-alanine + UDP + H(+). The protein operates within cell wall biogenesis; peptidoglycan biosynthesis. Its function is as follows. Cell wall formation. Catalyzes the transfer of a GlcNAc subunit on undecaprenyl-pyrophosphoryl-MurNAc-pentapeptide (lipid intermediate I) to form undecaprenyl-pyrophosphoryl-MurNAc-(pentapeptide)GlcNAc (lipid intermediate II). The chain is UDP-N-acetylglucosamine--N-acetylmuramyl-(pentapeptide) pyrophosphoryl-undecaprenol N-acetylglucosamine transferase from Zymomonas mobilis subsp. mobilis (strain ATCC 31821 / ZM4 / CP4).